We begin with the raw amino-acid sequence, 1268 residues long: SR-related and CTD-associated factor 8 (1268 aa).

In terms of domain architecture, CID spans 1-139 (MEAVKTFNSE…PLLDMAAGIP (139 aa)). A Phosphothreonine modification is found at Thr6. A Glycyl lysine isopeptide (Lys-Gly) (interchain with G-Cter in SUMO1) cross-link involves residue Lys18. Positions 270–283 (GEDSEHSEESKKEM) are enriched in basic and acidic residues. Disordered regions lie at residues 270–290 (GEDS…QLSH), 322–355 (QQQP…QQHF), and 385–469 (EIFE…PVRS). Ser273 carries the phosphoserine modification. The segment covering 327-354 (KVTPQDSQEGTFGSEHSASPSQGSSQQH) has biased composition (polar residues). Basic residues predominate over residues 394–443 (VAVRSRSRTHSRSRSRSPRKRRSRSRSGSRKRKHRKRSRSHSREKKRKAS). The span at 447–461 (SSERRAREREKERQK) shows a compositional bias: basic and acidic residues. One can recognise an RRM domain in the interval 477–551 (TTLWVGQVDK…KVIKIAWALN (75 aa)). Residue Ser617 is modified to Phosphoserine. Residues 776-807 (QIPSGENTRPVIPSDIPSSAAMLAQPPGASST) form a disordered region. Residues Arg915, Arg925, and Arg936 each carry the asymmetric dimethylarginine modification. Disordered regions lie at residues 984–1012 (PGRP…EGDR) and 1040–1065 (RLDP…PVDM). Position 1071 is an asymmetric dimethylarginine (Arg1071). Positions 1199–1268 (ATSQRKGDNV…VVESTETEGT (70 aa)) are disordered. Over residues 1249 to 1262 (GTVAGVESEAVVES) the composition is skewed to low complexity.

As to quaternary structure, interacts with POLR2A; via C-terminal heptapeptide repeat domain (CTD) phosphorylated at 'Ser-2' and 'Ser-5'. Identified in a complex with CDC5L and other spliceosomal proteins.

The protein localises to the nucleus. It is found in the nucleus matrix. Its function is as follows. Anti-terminator protein required to prevent early mRNA termination during transcription. Together with SCAF4, acts by suppressing the use of early, alternative poly(A) sites, thereby preventing the accumulation of non-functional truncated proteins. Mechanistically, associates with the phosphorylated C-terminal heptapeptide repeat domain (CTD) of the largest RNA polymerase II subunit (POLR2A), and subsequently binds nascent RNA upstream of early polyadenylation sites to prevent premature mRNA transcript cleavage and polyadenylation. Independently of SCAF4, also acts as a positive regulator of transcript elongation. The chain is SR-related and CTD-associated factor 8 from Mus musculus (Mouse).